A 260-amino-acid chain; its full sequence is Ribosome maturation factor RimP (260 aa).

Residues 198–260 are disordered; the sequence is QSLGILPPPP…RGDIDPIEGE (63 aa). 2 stretches are compositionally biased toward basic and acidic residues: residues 210-228 and 238-254; these read AKTD…ENGK and NTKE…RGDI.

Belongs to the RimP family.

It localises to the cytoplasm. Required for maturation of 30S ribosomal subunits. The chain is Ribosome maturation factor RimP from Nitrobacter winogradskyi (strain ATCC 25391 / DSM 10237 / CIP 104748 / NCIMB 11846 / Nb-255).